The chain runs to 244 residues: Carbonyl reductase [NADPH] 2 (244 aa).

11–39 (LVTGAGKGIGRDTVKALHASGAKVVAVTR) provides a ligand contact to NADP(+). Phosphoserine is present on Ser42. Ser136 serves as a coordination point for substrate. Tyr149 serves as the catalytic Proton acceptor. Ser176 bears the Phosphoserine mark.

It belongs to the short-chain dehydrogenases/reductases (SDR) family. Homotetramer. As to expression, predominantly expressed in lung, in ciliated cells, non-ciliated bronchiolar cells and type-II alveolar pneumocytes. Also detected in adipose tissue (at protein level). Low expression in testis, heart, kidney, spleen, brain and liver.

It is found in the mitochondrion matrix. The enzyme catalyses a secondary alcohol + NADP(+) = a ketone + NADPH + H(+). Its function is as follows. May function in the pulmonary metabolism of endogenous carbonyl compounds, such as aliphatic aldehydes and ketones derived from lipid peroxidation, 3-ketosteroids and fatty aldehydes, as well as in xenobiotic metabolism. This Mus musculus (Mouse) protein is Carbonyl reductase [NADPH] 2 (Cbr2).